The chain runs to 530 residues: MSSTASYRIFNFARNRIAVLRGGRRLYSRAATSRNQVKWRLFSPASLAVNDSSPHGGFALRKAYRHTSTEEEDFHLQLSPEQVSDLLRAGESSHKVLDFNSGVPNSVLRFESNQLAANSPVEDRQGVASCVQTRGTMFGIFDGHGGHACAQAVSERLFYYMAVSLMSHKTLEQMEEAMENMKPLLPILQWLKHPGDSIYKDITSVHLDHLRVYWQELLDLHMETGLSTEEALMYSFQRLDSDISLEIQAPLEDEVTKNLSLQVAFSGATACMAHVDGVHLHIANAGDCRAILGVQGDNGAWSCLPLTCDHNAWNEAELSRLKREHPESEDRTLIIDDRLLGVLLPCRAFGDVQLKWSKELQRNVLERGFDTEALNIYQFTPPHYHTPPYLTAKPEVTYHRLRPQDKFLVLASDGLWDMLDNEDVVRLVVGHLSKVGHQKPALDQRPANLGHMQSLLLQRKASGLHAADQNAATHLIRHAIGSNEYGEMEPERLAAMLTLPEDVARMYRDDITVMVVFFNSESIDTYFKEG.

The N-terminal 67 residues, 1-67, are a transit peptide targeting the mitochondrion; it reads MSSTASYRIF…FALRKAYRHT (67 aa). The region spanning 107–518 is the PPM-type phosphatase domain; it reads VLRFESNQLA…DDITVMVVFF (412 aa). Residues Asp142, Gly143, Asp413, and Asp509 each contribute to the Mn(2+) site.

The protein belongs to the PP2C family. Mg(2+) is required as a cofactor. Highly expressed in liver.

The protein resides in the mitochondrion. It carries out the reaction O-phospho-L-seryl-[pyruvate dehydrogenase E1 alpha subunit] + H2O = L-seryl-[pyruvate dehydrogenase E1 alpha subunit] + phosphate. Its activity is regulated as follows. Mg(2+)-dependent protein phosphatase. Phosphatase activity is increased in the presence of spermine, a naturally produced polyamine. Its function is as follows. Mitochondrial enzyme that catalyzes the dephosphorylation and concomitant reactivation of the alpha subunit of the E1 component of the pyruvate dehydrogenase complex (PDC), thereby stimulating the conversion of pyruvate into acetyl-CoA. Acts as a crucial regulator of T cell metabolism and function, with a particular focus on T-helper Th17. The polypeptide is [Pyruvate dehydrogenase [acetyl-transferring]]-phosphatase 2, mitochondrial (Pdp2) (Rattus norvegicus (Rat)).